The primary structure comprises 393 residues: UDP-sulfoquinovose synthase (393 aa).

NAD(+)-binding positions include 31–35, 74–75, arginine 100, and asparagine 118; these read DNLST and DI. Position 100 (arginine 100) interacts with substrate. Threonine 144 and tyrosine 182 together coordinate substrate. The active site involves threonine 144. The NAD(+) site is built by tyrosine 182 and lysine 186. Tyrosine 182 acts as the Proton acceptor in catalysis. The active site involves lysine 186. Glutamine 209 lines the substrate pocket. Residue valine 212 participates in NAD(+) binding. Substrate is bound by residues 238 to 241, 253 to 255, and 326 to 328; these read VVNR, TVY, and RVE.

This sequence belongs to the NAD(P)-dependent epimerase/dehydratase family. NAD(+) is required as a cofactor.

The enzyme catalyses sulfite + UDP-alpha-D-glucose + H(+) = UDP-alpha-D-6-sulfoquinovose + H2O. In terms of biological role, catalyzes the biosynthesis of UDP-sulfoquinovose by the transfer of sulfite to UDP-glucose. Important for the assembly of the S-layer N-glycans. The reaction probably occurs through an NAD(+)-dependent oxidation/dehydration/enolization/sulfite addition process. In vitro, in the absence of sulfite, UDP-D-glucose is converted via UDP-4-keto-D-glucose to UDP-D-glucose-5,6-ene. This chain is UDP-sulfoquinovose synthase, found in Sulfolobus acidocaldarius (strain ATCC 33909 / DSM 639 / JCM 8929 / NBRC 15157 / NCIMB 11770).